The following is a 541-amino-acid chain: Apolipoprotein N-acyltransferase (541 aa).

6 helical membrane passes run 21-41 (LSGF…WYSL), 54-74 (LFVS…SWML), 82-102 (LIYL…SGFS), 116-136 (FLWS…YGIF), 157-177 (FGGF…NMSF), and 189-209 (MLWV…YEYL). Residues 220-499 (LRVAVVQPAH…SGVLETSLPL (280 aa)) enclose the CN hydrolase domain. Catalysis depends on glutamate 264, which acts as the Proton acceptor. Lysine 349 is an active-site residue. Cysteine 404 acts as the Nucleophile in catalysis. A helical transmembrane segment spans residues 512–532 (YPMILIAFCAVSYLGGGFLGY).

Belongs to the CN hydrolase family. Apolipoprotein N-acyltransferase subfamily.

The protein localises to the cell inner membrane. The catalysed reaction is N-terminal S-1,2-diacyl-sn-glyceryl-L-cysteinyl-[lipoprotein] + a glycerophospholipid = N-acyl-S-1,2-diacyl-sn-glyceryl-L-cysteinyl-[lipoprotein] + a 2-acyl-sn-glycero-3-phospholipid + H(+). It functions in the pathway protein modification; lipoprotein biosynthesis (N-acyl transfer). In terms of biological role, catalyzes the phospholipid dependent N-acylation of the N-terminal cysteine of apolipoprotein, the last step in lipoprotein maturation. The polypeptide is Apolipoprotein N-acyltransferase (Chlamydia pneumoniae (Chlamydophila pneumoniae)).